The following is a 306-amino-acid chain: Protein FAM228A (306 aa).

A disordered region spans residues 237–277; that stretch reads HASKLSQQNKGAEKKGLALGTRAQRPRSWAAADSPQGTPLV. Ser-270 is subject to Phosphoserine.

Belongs to the FAM228 family.

The sequence is that of Protein FAM228A (Fam228a) from Rattus norvegicus (Rat).